The following is a 309-amino-acid chain: Small ribosomal subunit biogenesis GTPase RsgA (309 aa).

One can recognise a CP-type G domain in the interval 88–247 (KNLITRPPVA…IADTPGFNKP (160 aa)). GTP-binding positions include 137–140 (TKRD) and 189–197 (GPSGVGKSS). Positions 272, 277, 279, and 285 each coordinate Zn(2+).

The protein belongs to the TRAFAC class YlqF/YawG GTPase family. RsgA subfamily. As to quaternary structure, monomer. Associates with 30S ribosomal subunit, binds 16S rRNA. The cofactor is Zn(2+).

It is found in the cytoplasm. Its function is as follows. One of several proteins that assist in the late maturation steps of the functional core of the 30S ribosomal subunit. Helps release RbfA from mature subunits. May play a role in the assembly of ribosomal proteins into the subunit. Circularly permuted GTPase that catalyzes slow GTP hydrolysis, GTPase activity is stimulated by the 30S ribosomal subunit. The sequence is that of Small ribosomal subunit biogenesis GTPase RsgA from Prochlorococcus marinus (strain SARG / CCMP1375 / SS120).